A 378-amino-acid polypeptide reads, in one-letter code: Neutral protease 2 homolog ARB_04336 (378 aa).

Residues 1–19 form the signal peptide; that stretch reads MKFFTALAAVGALLAPAVA. Positions 20–186 are excised as a propeptide; the sequence is LPTPASEASH…DYFSKGLDKR (167 aa). 2 disulfide bridges follow: Cys-192-Cys-262 and Cys-269-Cys-287. His-311 contributes to the Zn(2+) binding site. The active site involves Glu-312. Residues His-315 and Asp-326 each contribute to the Zn(2+) site.

The protein belongs to the peptidase M35 family. Zn(2+) serves as cofactor.

Its subcellular location is the secreted. It catalyses the reaction Preferential cleavage of bonds with hydrophobic residues in P1'. Also 3-Asn-|-Gln-4 and 8-Gly-|-Ser-9 bonds in insulin B chain.. In terms of biological role, secreted metalloproteinase that allows assimilation of proteinaceous substrates. Shows high activities on basic nuclear substrates such as histone and protamine. May be involved in virulence. The sequence is that of Neutral protease 2 homolog ARB_04336 from Arthroderma benhamiae (strain ATCC MYA-4681 / CBS 112371) (Trichophyton mentagrophytes).